We begin with the raw amino-acid sequence, 852 residues long: MSSVSPIQIPSRLPLLLTHEGVLLPGSTMRTSVDSARNLQLVRSRLLKGTSLQSTILGVIPNTPDPASDAQDLPPLHRIGTAALAVQVVGSNWPKPHYTLLITGLCRFQIVQVLKEKPYPIAEVEQLDRLEEFPNTCKMREELGELSEQFYKYAVQLVEMLDMSVPAVAKLRRLLDSLPREALPDILTSIIRTSNKEKLQILDAVSLEERFKMTIPLLVRQIEGLKLLQKTRKPKQDDDKRVIAIRPIRRITHISGTLEDEDEDEDNDDIVMLEKKIRTSSMPEQAHKVCVKEIKRLKKMPQSMPEYALTRNYLELMVELPWNKSTTDRLDIRAARILLDNDHYAMEKLKKRVLEYLAVRQLKNNLKGPILCFVGPPGVGKTSVGRSVAKTLGREFHRIALGGVCDQSDIRGHRRTYVGSMPGRIINGLKTVGVNNPVFLLDEVDKLGKSLQGDPAAALLEVLDPEQNHNFTDHYLNVAFDLSQVLFIATANTTATIPAALLDRMEIIQVPGYTQEEKIEIAHRHLIPKQLEQHGLTPQQIQIPQVTTLDIITRYTREAGVRSLDRKLGAICRAVAVKVAEGQHKEAKLDRSDVTEREGCREHILEDEKPESISDTTDLALPPEMPILIDFHALKDILGPPMYEMEVSQRLSQPGVAIGLAWTPLGGEIMFVEASRMDGEGQLTLTGQLGDVMKESAHLAISWLRSNAKKYQLTNAFGSFDLLDNTDIHLHFPAGAVTKDGPSAGVTIVTCLASLFSGRLVRSDVAMTGEITLRGLVLPVGGIKDKVLAAHRAGLKQVIIPRRNEKDLEGIPGNVRQDLSFVTASCLDEVLNAAFDGGFTVKTRPGLLNSKL.

Ser2 bears the N-acetylserine mark. The Lon N-terminal domain occupies 13–222 (LPLLLTHEGV…MTIPLLVRQI (210 aa)). ATP is bound at residue 375–382 (GPPGVGKT). The region spanning 651 to 837 (LSQPGVAIGL…DEVLNAAFDG (187 aa)) is the Lon proteolytic domain. Active-site residues include Ser743 and Lys786. The short motif at 850-852 (SKL) is the Microbody targeting signal element.

The protein belongs to the peptidase S16 family. Interacts with PEX5. Interacts with TYSND1. May interact with enzymes involved in beta-oxidation of fatty acids, including ACOX1/AOX. In terms of tissue distribution, widely expressed, with high levels in the liver, kidney and pancreas.

The protein resides in the peroxisome matrix. It carries out the reaction Hydrolysis of proteins in presence of ATP.. ATP-dependent serine protease that mediates the selective degradation of misfolded and unassembled polypeptides in the peroxisomal matrix. Necessary for type 2 peroxisome targeting signal (PTS2)-containing protein processing and facilitates peroxisome matrix protein import. May indirectly regulate peroxisomal fatty acid beta-oxidation through degradation of the self-processed forms of TYSND1. The chain is Lon protease homolog 2, peroxisomal from Homo sapiens (Human).